The primary structure comprises 410 residues: MTYLELLALLALQSVVTGATFPDETITEWSVNMYNHLRGTGEDENILFSPLSIALAMGMMELGAQGSTRKEIRHSMGYEGLKGGEEFSFLRDFSNMASAEENQYVMKLANSLFVQNGFHVNEEFLQMLKMYFNAEVNHVDFSQNVAVANSINKWVENYTNSLLKDLVSPEDFDGVTNLALINAVYFKGNWKSQFRPENTRTFSFTKDDESEVQIPMMYQQGEFYYGEFSDGSNEAGGIYQVLEIPYEGDEISMMLALSRQEVPLATLEPLLKAQLIEEWANSVKKQKVEVYLPRFTVEQEIDLKDILKALGVTEIFIKDANLTAMSDKKELFLSKAVHKSCIEVNEEGSEAAAASGMIAISRMAVLYPQVIVDHPFLYLIRNRKSGIILFMGRVMNPETMNTSGHDFEEL.

A signal peptide spans 1 to 16; that stretch reads MTYLELLALLALQSVV. 3 N-linked (GlcNAc...) asparagine glycosylation sites follow: N157, N321, and N401. Residue S403 is glycosylated (O-linked (Xyl...) (chondroitin sulfate) serine).

It belongs to the serpin family. In terms of tissue distribution, detected in neurons in embryonic brain cortex (at protein level). During embryonic development mostly expressed in CNS. In adult expressed in brain and much less in spinal cord, heart, kidney and testis.

The protein resides in the secreted. It localises to the cytoplasmic vesicle. Its subcellular location is the secretory vesicle lumen. It is found in the perikaryon. Its function is as follows. Serine protease inhibitor that inhibits plasminogen activators and plasmin but not thrombin. May be involved in the formation or reorganization of synaptic connections as well as for synaptic plasticity in the adult nervous system. May protect neurons from cell damage by tissue-type plasminogen activator. This Mus musculus (Mouse) protein is Neuroserpin (Serpini1).